The following is a 93-amino-acid chain: Small ribosomal subunit protein uS19 (93 aa).

Belongs to the universal ribosomal protein uS19 family.

In terms of biological role, protein S19 forms a complex with S13 that binds strongly to the 16S ribosomal RNA. In Microcystis aeruginosa (strain NIES-843 / IAM M-2473), this protein is Small ribosomal subunit protein uS19.